Consider the following 208-residue polypeptide: GTP-binding protein Rho1 (208 aa).

Residue 19–26 participates in GTP binding; it reads GDGACGKT. An Effector region motif is present at residues 41 to 49; it reads YVPTVFDNY. Residues 66-70 and 124-127 each bind GTP; these read DTAGQ and CKAD. The segment at 188–208 is disordered; that stretch reads GKQGKSKPKTKSSKKKKCVVL. The segment covering 191–208 has biased composition (basic residues); it reads GKSKPKTKSSKKKKCVVL. Cysteine methyl ester is present on C205. C205 carries the S-geranylgeranyl cysteine lipid modification. A propeptide spans 206–208 (removed in mature form); it reads VVL.

Belongs to the small GTPase superfamily. Rho family.

Its subcellular location is the cell membrane. The polypeptide is GTP-binding protein Rho1 (RHO1) (Kluyveromyces lactis (strain ATCC 8585 / CBS 2359 / DSM 70799 / NBRC 1267 / NRRL Y-1140 / WM37) (Yeast)).